Consider the following 127-residue polypeptide: Large ribosomal subunit protein bL19 (127 aa).

The protein belongs to the bacterial ribosomal protein bL19 family.

This protein is located at the 30S-50S ribosomal subunit interface and may play a role in the structure and function of the aminoacyl-tRNA binding site. This chain is Large ribosomal subunit protein bL19, found in Paraburkholderia phymatum (strain DSM 17167 / CIP 108236 / LMG 21445 / STM815) (Burkholderia phymatum).